We begin with the raw amino-acid sequence, 198 residues long: Nucleoside triphosphate pyrophosphatase (198 aa).

The active-site Proton acceptor is the aspartate 70.

This sequence belongs to the Maf family. It depends on a divalent metal cation as a cofactor.

It localises to the cytoplasm. The catalysed reaction is a ribonucleoside 5'-triphosphate + H2O = a ribonucleoside 5'-phosphate + diphosphate + H(+). The enzyme catalyses a 2'-deoxyribonucleoside 5'-triphosphate + H2O = a 2'-deoxyribonucleoside 5'-phosphate + diphosphate + H(+). In terms of biological role, nucleoside triphosphate pyrophosphatase. May have a dual role in cell division arrest and in preventing the incorporation of modified nucleotides into cellular nucleic acids. This Thermosynechococcus vestitus (strain NIES-2133 / IAM M-273 / BP-1) protein is Nucleoside triphosphate pyrophosphatase.